A 79-amino-acid chain; its full sequence is Acyl carrier protein (79 aa).

Residues 1 to 79 enclose the Carrier domain; that stretch reads MTKEQILVDV…DVVSYIETQV (79 aa). An O-(pantetheine 4'-phosphoryl)serine modification is found at Ser-39.

It belongs to the acyl carrier protein (ACP) family. 4'-phosphopantetheine is transferred from CoA to a specific serine of apo-ACP by AcpS. This modification is essential for activity because fatty acids are bound in thioester linkage to the sulfhydryl of the prosthetic group.

Its subcellular location is the cytoplasm. The protein operates within lipid metabolism; fatty acid biosynthesis. Functionally, carrier of the growing fatty acid chain in fatty acid biosynthesis. The chain is Acyl carrier protein from Exiguobacterium sibiricum (strain DSM 17290 / CCUG 55495 / CIP 109462 / JCM 13490 / 255-15).